A 351-amino-acid chain; its full sequence is Silk gland factor 3 (351 aa).

2 disordered regions span residues 61–88 and 131–154; these read ADPW…HDHR and SSPR…TPTS. Basic and acidic residues predominate over residues 135–145; sequence DPLHHHAMERD. Residues 149–223 enclose the POU-specific domain; sequence EDTPTSDDLE…LLQKWLEEAD (75 aa). Positions 241–300 form a DNA-binding region, homeobox; that stretch reads KRKKRTSIEVSVKGALEQHFHKQPKPSAQEITSLADSLQLEKEVVRVWFCNRRQKEKRMT. The tract at residues 314 to 351 is disordered; it reads GHAHYGHGDVHGSPLQHSPPGLSPQHGLPQGAHTLAAH.

It belongs to the POU transcription factor family. Class-3 subfamily. As to expression, restricted to the middle silk gland.

The protein resides in the nucleus. In terms of biological role, involved in the transcriptional regulation of sericin-1 gene. The protein is Silk gland factor 3 (SGF3) of Bombyx mori (Silk moth).